A 555-amino-acid polypeptide reads, in one-letter code: Inositol 1,4,5-trisphosphate receptor-interacting protein-like 1 (555 aa).

The signal sequence occupies residues 1–24 (MNVDAEASMAVISLLFLAVMYVVH). Residues 25 to 103 (HPLMVSDRMD…WPFQADGQEG (79 aa)) lie on the Extracellular side of the membrane. Residues 38 to 74 (LARSRQLEKRMSEEMRLLEMEFEERKRAAEQRQKAEN) are a coiled coil. A helical membrane pass occupies residues 104-124 (PLGWMLGNLWNTGLFCLFLVF). The Cytoplasmic portion of the chain corresponds to 125–555 (ELLRQNMQHE…LPHAPLAAAP (431 aa)).

It belongs to the ITPRIP family. Expressed in testis and tumoral cells.

The protein localises to the cell membrane. Functions as a ligand of CD3E, inhibiting TCR-CD3 complex signaling to regulate T cell activation. Induces stable CD3E-NCK1 binding, thereby preventing the CD3E-ZAP70 interaction and subsequently inhibiting the activation of the downstream ERK-NFkB signaling cascade and calcium influx. This chain is Inositol 1,4,5-trisphosphate receptor-interacting protein-like 1, found in Homo sapiens (Human).